Here is a 253-residue protein sequence, read N- to C-terminus: Troponin T, fast skeletal muscle isoforms (253 aa).

Over residues 1 to 25 the composition is skewed to acidic residues; the sequence is MSDTEEVEHGEEEYEEEEEVQEEEV. Disordered regions lie at residues 1-58 and 97-178; these read MSDT…DIQK and RAER…VLAE. Ser2 is modified (N-acetylserine). Composition is skewed to basic and acidic residues over residues 46–58, 97–139, and 167–178; these read PEGE…DIQK, RAER…DDLK, and TARETKKKVLAE.

It belongs to the troponin T family.

In terms of biological role, troponin T is the tropomyosin-binding subunit of troponin, the thin filament regulatory complex which confers calcium-sensitivity to striated muscle actomyosin ATPase activity. This is Troponin T, fast skeletal muscle isoforms (TNNT3) from Coturnix japonica (Japanese quail).